The chain runs to 332 residues: Phosphate acyltransferase (332 aa).

Belongs to the PlsX family. In terms of assembly, homodimer. Probably interacts with PlsY.

The protein resides in the cytoplasm. It catalyses the reaction a fatty acyl-[ACP] + phosphate = an acyl phosphate + holo-[ACP]. Its pathway is lipid metabolism; phospholipid metabolism. Functionally, catalyzes the reversible formation of acyl-phosphate (acyl-PO(4)) from acyl-[acyl-carrier-protein] (acyl-ACP). This enzyme utilizes acyl-ACP as fatty acyl donor, but not acyl-CoA. The protein is Phosphate acyltransferase of Nitratiruptor sp. (strain SB155-2).